Reading from the N-terminus, the 618-residue chain is Nuclear RNA export factor 1 (618 aa).

Basic and acidic residues predominate over residues 1 to 15; sequence MADEGKSYNEHDDRV. Residues 1–113 are disordered; sequence MADEGKSYNE…RGGAGTSQDG (113 aa). N-acetylalanine is present on Ala2. Residues 2 to 59 form a minor non-specific RNA-binding region; sequence ADEGKSYNEHDDRVSFPQRRKKGRGPFRWKCGVGNRRSGRGGSGIRSSRFEEDDGDVA. Residues 2–117 form an RNA-binding (RBD) region; it reads ADEGKSYNEH…GTSQDGTTKN (116 aa). The interaction with ALYREF/THOC4 and LUZP4 stretch occupies residues 2 to 197; that stretch reads ADEGKSYNEH…IIINSSAPPY (196 aa). Over residues 19 to 28 the composition is skewed to basic residues; it reads QRRKKGRGPF. Position 41 is an asymmetric dimethylarginine; alternate (Arg41). Arg41 bears the Omega-N-methylarginine; alternate mark. Positions 60–117 are major non-specific RNA-binding; sequence MNDPQDGPRVRFNPYTTRPNRRRDTWHDRDRIHVTVRRDRAPQERGGAGTSQDGTTKN. Residues 60–117 are RNA binding; sequence MNDPQDGPRVRFNPYTTRPNRRRDTWHDRDRIHVTVRRDRAPQERGGAGTSQDGTTKN. Positions 66–99 match the Nuclear localization signal motif; that stretch reads GPRVRFNPYTTRPNRRRDTWHDRDRIHVTVRRDR. The segment covering 81–102 has biased composition (basic and acidic residues); it reads RRDTWHDRDRIHVTVRRDRAPQ. A Nuclear export signal motif is present at residues 82-109; sequence RDTWHDRDRIHVTVRRDRAPQERGGAGT. The RRM domain maps to 118–197; sequence WFKITIPYGK…IIINSSAPPY (80 aa). At Tyr125 the chain carries 3'-nitrotyrosine. 4 LRR repeats span residues 265–290, 291–314, 315–342, and 343–370; these read ELLS…QKAP, NLKI…IKGL, KLEE…TIRE, and RFPK…TMLP. One can recognise an NTF2 domain in the interval 385 to 535; the sequence is LVLHFLQQYY…LCIVNDELFV (151 aa). Residues 564–618 form the TAP-C domain; sequence QEQQDMLQAFSTQSGMNLEWSQKCLQDNNWDYTRSAQAFTHLKAKGEIPEVAFMK.

The protein belongs to the NXF family. In terms of assembly, heterodimer (via NTF2 domain) with NXT1. The formation of NXF1-NXT1 heterodimers is required for the NXF1-mediated nuclear mRNA export. Forms a complex with RANBP2/NUP358, NXT1 and RANGAP1. Associates with the exon junction complex (EJC). Associates with the transcription/export (TREX) complex. Found in a mRNA complex with UPF3A and UPF3B. Found in a post-splicing complex with RBM8A, UPF1, UPF2, UPF3A, UPF3B and RNPS1. Interacts (via N-terminus) with DHX9 (via N-terminus); this interaction is direct and negatively regulates NXF1-mediated nuclear export of constitutive transport element (CTE)-containing cellular mRNAs. Interacts with FYTTD1/UIF. Interacts with EIF4A3. Interacts with NUP42. Interacts with ALYREF/THOC4. Interacts with CHTOP. Interacts with FRG1 (via N-terminus). Interacts with LUZP4. Interacts with FMR1; the interaction occurs in a mRNA-dependent and polyribosomes-independent manner in the nucleus. Interacts with CPSF6 (via N-terminus); this interaction is direct. Interacts with RBM15. Interacts with RBM15B. Interacts with MCM3AP; this interaction is not mediated by RNA. Interacts with DDX3X (via C-terminus); this interaction may be partly involved in DDX3X nuclear export and in NXF1 localization to stress granules. Interacts with PABPC1/PABP1.

It is found in the nucleus. It localises to the nucleoplasm. The protein resides in the nucleus speckle. Its subcellular location is the nuclear pore complex. The protein localises to the nucleus envelope. It is found in the cytoplasm. It localises to the stress granule. Functionally, involved in the nuclear export of mRNA species bearing retroviral constitutive transport elements (CTE) and in the export of mRNA from the nucleus to the cytoplasm (TAP/NFX1 pathway). The NXF1-NXT1 heterodimer is involved in the export of HSP70 mRNA in conjunction with ALYREF/THOC4 and THOC5 components of the TREX complex. ALYREF/THOC4-bound mRNA is thought to be transferred to the NXF1-NXT1 heterodimer for export. Also involved in nuclear export of m6A-containing mRNAs: interaction between SRSF3 and YTHDC1 facilitates m6A-containing mRNA-binding to both SRSF3 and NXF1, promoting mRNA nuclear export. This chain is Nuclear RNA export factor 1 (Nxf1), found in Rattus norvegicus (Rat).